We begin with the raw amino-acid sequence, 351 residues long: Histidine protein kinase SaeS (351 aa).

A run of 2 helical transmembrane segments spans residues 9 to 29 (IIIG…IAYI) and 40 to 60 (TLTL…SIFI). Positions 61–114 (NPLIQKIKQFNIKTKQFANGNYASNDKTFNSPKEIYELNQSFNKMASEITQQMN) constitute an HAMP domain. In terms of domain architecture, Histidine kinase spans 129-348 (NLAHDLKTPL…TMTVTLHKLD (220 aa)). His132 is subject to Phosphohistidine; by autocatalysis.

Post-translationally, autophosphorylated.

It is found in the cell membrane. The catalysed reaction is ATP + protein L-histidine = ADP + protein N-phospho-L-histidine.. In terms of biological role, member of the two-component regulatory system SaeR/SaeS involved in the regulation of staphylococcal virulence factors in a strain-dependent fashion. Probably functions as a membrane-associated protein kinase that upon sensing the appropriate signal, autophosphorylates and in turn activates the cytosolic response regulator SaeR. The sequence is that of Histidine protein kinase SaeS (saeS) from Staphylococcus aureus (strain bovine RF122 / ET3-1).